Consider the following 433-residue polypeptide: Serine hydroxymethyltransferase (433 aa).

121 to 123 is a binding site for (6S)-5,6,7,8-tetrahydrofolate; it reads AHV. N6-(pyridoxal phosphate)lysine is present on Lys-227. Residue Glu-243 participates in (6S)-5,6,7,8-tetrahydrofolate binding.

This sequence belongs to the SHMT family. In terms of assembly, homodimer. Requires pyridoxal 5'-phosphate as cofactor.

Its subcellular location is the cytoplasm. It functions in the pathway amino-acid biosynthesis; glycine biosynthesis; glycine from L-serine: step 1/1. Functionally, catalyzes the reversible interconversion of serine and glycine with a modified folate serving as the one-carbon carrier. Also exhibits a pteridine-independent aldolase activity toward beta-hydroxyamino acids, producing glycine and aldehydes, via a retro-aldol mechanism. The sequence is that of Serine hydroxymethyltransferase from Saccharolobus islandicus (strain Y.G.57.14 / Yellowstone #1) (Sulfolobus islandicus).